We begin with the raw amino-acid sequence, 59 residues long: Cecropin-A (59 aa).

Positions 1-23 (MNFNKLFVIVLLAALAFFGQAEA) are cleaved as a signal peptide. Leu-57 is subject to Leucine amide.

It belongs to the cecropin family.

It localises to the secreted. Functionally, cecropins have lytic and antibacterial activity against several Gram-positive and Gram-negative bacteria. In Culex pipiens pipiens (Northern house mosquito), this protein is Cecropin-A (CECA).